The sequence spans 213 residues: Phospho-2-dehydro-3-deoxyheptonate aldolase, Tyr-sensitive (213 aa).

Belongs to the class-I DAHP synthase family.

It carries out the reaction D-erythrose 4-phosphate + phosphoenolpyruvate + H2O = 7-phospho-2-dehydro-3-deoxy-D-arabino-heptonate + phosphate. Its pathway is metabolic intermediate biosynthesis; chorismate biosynthesis; chorismate from D-erythrose 4-phosphate and phosphoenolpyruvate: step 1/7. Stereospecific condensation of phosphoenolpyruvate (PEP) and D-erythrose-4-phosphate (E4P) giving rise to 3-deoxy-D-arabino-heptulosonate-7-phosphate (DAHP). The chain is Phospho-2-dehydro-3-deoxyheptonate aldolase, Tyr-sensitive (aroF) from Enterobacter agglomerans (Erwinia herbicola).